The sequence spans 513 residues: Na(+)/H(+) antiporter NhaB (513 aa).

The next 11 helical transmembrane spans lie at 23 to 43 (LALIIFLILNPLIFIISPFVA), 52 to 72 (IFTLAMALKCYPLLPGGLLAI), 97 to 117 (LLLMFMVAGIYFMKQLLLFIF), 144 to 164 (FLDALTVVAVVISVAVGFYGI), 202 to 222 (LMMHAGVGTALGGVMTMVGEP), 238 to 258 (FFLRMSPVTVPVLICGLLTCL), 303 to 323 (AIIGVWLVTALALHLAEVGLI), 348 to 368 (TESLPFTALLTVFFSVVAVII), 391 to 411 (LFYIFNGLLSSISDNVFVGTI), 447 to 467 (ATPNGQAAFLFLLTSALAPLI), and 475 to 495 (VWMALPYTLVLTLVGLLCVEF).

It belongs to the NhaB Na(+)/H(+) (TC 2.A.34) antiporter family.

It is found in the cell inner membrane. It carries out the reaction 2 Na(+)(in) + 3 H(+)(out) = 2 Na(+)(out) + 3 H(+)(in). Functionally, na(+)/H(+) antiporter that extrudes sodium in exchange for external protons. This Escherichia coli (strain SMS-3-5 / SECEC) protein is Na(+)/H(+) antiporter NhaB.